Here is a 68-residue protein sequence, read N- to C-terminus: Antimicrobial peptide UyCT3 (68 aa).

Residues 1-23 (MKNQFVLLLLAIVFLQMIFQSDA) form the signal peptide. Phe36 is modified (phenylalanine amide). Positions 40 to 68 (GLENMDKFDELFDGDLSEADLDFLKELMR) are excised as a propeptide.

This sequence belongs to the non-disulfide-bridged peptide (NDBP) superfamily. Short antimicrobial peptide (group 4) family. The non-amidated UyCT3 does not show antimicrobial activity. Expressed by the venom gland.

Its subcellular location is the secreted. The protein localises to the target cell membrane. Antimicrobial peptide that inhibits the growth of Gram-positive (S.aureus, MIC=10 uM) and Gram-negative bacteria (E.coli, MIC=15 uM and P.aeruginosa, MIC=6 uM). It also shows 35% of hemolysis when 15 uM are tested (95% at 50 uM). This chain is Antimicrobial peptide UyCT3, found in Urodacus yaschenkoi (Inland robust scorpion).